The primary structure comprises 289 residues: Capsid protein (289 aa).

The residue at position 2 (alanine 2) is an N-acetylalanine; by host.

The protein belongs to the high plain virus capsid family.

It is found in the virion. The chain is Capsid protein from Hordeum vulgare (Barley).